The sequence spans 293 residues: Formamidopyrimidine-DNA glycosylase (293 aa).

P2 serves as the catalytic Schiff-base intermediate with DNA. E3 serves as the catalytic Proton donor. K58 functions as the Proton donor; for beta-elimination activity in the catalytic mechanism. DNA is bound by residues H104, R127, and R170. An FPG-type zinc finger spans residues 257–293 (SVYGREGKPCRNPACGGTVERVVQSGRSTFFCASCQT). The Proton donor; for delta-elimination activity role is filled by R283.

The protein belongs to the FPG family. As to quaternary structure, monomer. It depends on Zn(2+) as a cofactor.

It carries out the reaction Hydrolysis of DNA containing ring-opened 7-methylguanine residues, releasing 2,6-diamino-4-hydroxy-5-(N-methyl)formamidopyrimidine.. It catalyses the reaction 2'-deoxyribonucleotide-(2'-deoxyribose 5'-phosphate)-2'-deoxyribonucleotide-DNA = a 3'-end 2'-deoxyribonucleotide-(2,3-dehydro-2,3-deoxyribose 5'-phosphate)-DNA + a 5'-end 5'-phospho-2'-deoxyribonucleoside-DNA + H(+). Its function is as follows. Involved in base excision repair of DNA damaged by oxidation or by mutagenic agents. Acts as a DNA glycosylase that recognizes and removes damaged bases. Has a preference for oxidized purines, such as 7,8-dihydro-8-oxoguanine (8-oxoG). Has AP (apurinic/apyrimidinic) lyase activity and introduces nicks in the DNA strand. Cleaves the DNA backbone by beta-delta elimination to generate a single-strand break at the site of the removed base with both 3'- and 5'-phosphates. This is Formamidopyrimidine-DNA glycosylase from Brucella melitensis biotype 1 (strain ATCC 23456 / CCUG 17765 / NCTC 10094 / 16M).